A 641-amino-acid polypeptide reads, in one-letter code: Probable licABCH operon regulator (641 aa).

2 consecutive PRD domains span residues 184 to 289 and 296 to 403; these read ILPK…TQSQ and SIEE…KKTE. Phosphohistidine; by HPr is present on residues His219, His278, His333, and His392. The 92-residue stretch at 407 to 498 folds into the PTS EIIB type-2 domain; the sequence is KRCIIVCASG…ILSDEKEKAN (92 aa). Position 413 is a phosphocysteine; by EIIA (Cys413). The region spanning 499-638 is the PTS EIIA type-2 domain; that stretch reads RYLKKELVFF…QELSDVFDQK (140 aa). His559 carries the post-translational modification Phosphohistidine; by EIIB.

Belongs to the transcriptional antiterminator BglG family.

With respect to regulation, the regulatory activity of LicR is modulated by phosphorylation and dephosphorylation of the various LicR domains. It becomes activated via phosphoryl group transfer from PEP, EI and HPr on the two conserved histidine residues in the PRD 2 domain, whereas phosphorylation of the EIIA-like domain on His-559 by the PTS EIIB component LicB inactivates LicR. Positive regulator of the licABCH operon. In Bacillus subtilis (strain 168), this protein is Probable licABCH operon regulator (licR).